The primary structure comprises 72 residues: Translation initiation factor IF-1 (72 aa).

Residues 1–72 (MAKDDVIEVE…NRGRITYRFK (72 aa)) form the S1-like domain. The residue at position 60 (Tyr60) is a Phosphotyrosine.

It belongs to the IF-1 family. As to quaternary structure, component of the 30S ribosomal translation pre-initiation complex which assembles on the 30S ribosome in the order IF-2 and IF-3, IF-1 and N-formylmethionyl-tRNA(fMet); mRNA recruitment can occur at any time during PIC assembly.

It is found in the cytoplasm. Its function is as follows. One of the essential components for the initiation of protein synthesis. Stabilizes the binding of IF-2 and IF-3 on the 30S subunit to which N-formylmethionyl-tRNA(fMet) subsequently binds. Helps modulate mRNA selection, yielding the 30S pre-initiation complex (PIC). Upon addition of the 50S ribosomal subunit IF-1, IF-2 and IF-3 are released leaving the mature 70S translation initiation complex. In Bacillus thuringiensis (strain Al Hakam), this protein is Translation initiation factor IF-1.